A 927-amino-acid polypeptide reads, in one-letter code: Huntington interacting protein related 1 (927 aa).

In terms of domain architecture, ENTH spans 7–136 (AREVFVRAQL…TFHNKYPVVP (130 aa)). A coiled-coil region spans residues 336–524 (RAVEDEKFAK…RESHANQLVQ (189 aa)). The region spanning 673 to 914 (QTDIDKDVVG…ALRKQHYHMA (242 aa)) is the I/LWEQ domain.

This sequence belongs to the SLA2 family.

The protein localises to the cytoplasm. The protein resides in the cytoskeleton. Its function is as follows. Regulates pre-synaptic vesicle recycling at neuromuscular junctions of mechanosensory neurons. Plays a role in maintaining a normal defecation cycle. This is Huntington interacting protein related 1 (hipr-1) from Caenorhabditis elegans.